The following is a 282-amino-acid chain: Trihydroxynaphthalene reductase PfmaI (282 aa).

Positions 41, 114, and 147 each coordinate NADP(+). Catalysis depends on proton donor residues Ser164 and Tyr178. NADP(+) is bound by residues Tyr178, Lys182, Ile211, and Thr213. The Lowers pKa of active site Tyr role is filled by Lys182.

This sequence belongs to the short-chain dehydrogenases/reductases (SDR) family.

Its pathway is pigment biosynthesis; melanin biosynthesis. Trihydroxynaphthalene reductase involved the biosynthesis of dihydroxynaphthalene (DHN)-melanin, a bluish-green pigment forming a dark layer in the conidial wall that protects the conidia from UV radiations. The first step of the pathway is the production of the pentaketide 1,3,6,8-tetrahydroxynaphthalene (1,3,6,8-THN or T4HN) by the polyketide synthase PfmaE though condensation of acetyl-CoA with malonyl-CoA. T4HN is not stable and easily oxidizes into the stable form flaviolin. T4HN is also substrate of the hydroxynaphthalene reductase PfmaG to yield scytalone. The scytalone dehydratase PfmaJ then reduces scytalone to 1,3,8-THN. 1,3,8-THN is then substrate of the hydroxynaphthalene reductase PfmaI to yield vermelone. Vermelone is further converted by the multicopper oxidase PfmaD to 1,8-DHN. Finally the laccase PFICI_06862 transforms 1,8-DHN to DHN-melanin. The roles of the 5-oxoprolinase PfmaA and the proline iminopeptidase PfmaB within the cluster have not been elucidated yet. The polypeptide is Trihydroxynaphthalene reductase PfmaI (Pestalotiopsis fici (strain W106-1 / CGMCC3.15140)).